The following is a 346-amino-acid chain: uncharacterized protein (346 aa).

Residues 321 to 346 are disordered; it reads TPWGTHSVAGVGPPPYARSGPASATT.

This is an uncharacterized protein from Mycobacterium tuberculosis (strain CDC 1551 / Oshkosh).